A 629-amino-acid polypeptide reads, in one-letter code: Kelch-like protein 8 (629 aa).

A compositionally biased stretch (polar residues) spans methionine 1–glutamine 10. Residues methionine 1–serine 40 are disordered. At alanine 2 the chain carries N-acetylalanine. The segment covering alanine 11 to glutamine 23 has biased composition (basic residues). Residues histidine 24 to glutamine 35 are compositionally biased toward low complexity. One can recognise a BTB domain in the interval cysteine 76–valine 143. Positions cysteine 178–valine 279 constitute a BACK domain. Kelch repeat units follow at residues valine 328 to glycine 375, lysine 376 to glycine 422, isoleucine 424 to asparagine 469, valine 471 to glycine 516, cysteine 517 to glycine 563, and isoleucine 565 to cysteine 610.

As to quaternary structure, component of the BCR(KLHL8) E3 ubiquitin ligase complex, at least composed of CUL3, KLHL8 and RBX1. Interacts with RAPSN.

The protein operates within protein modification; protein ubiquitination. Functionally, substrate-specific adapter of a BCR (BTB-CUL3-RBX1) E3 ubiquitin ligase complex required for The BCR(KLHL8) ubiquitin ligase complex mediates ubiquitination and degradation of RAPSN. This chain is Kelch-like protein 8 (Klhl8), found in Mus musculus (Mouse).